A 248-amino-acid chain; its full sequence is UPF0328 protein ECU06_0030/ECU06_1690/ECU11_0020 (248 aa).

Disordered regions lie at residues 1-34 (MVRH…HPSR) and 51-81 (ASAE…ILPD). Composition is skewed to polar residues over residues 10 to 19 (PKTTNPNPES) and 61 to 76 (QNLS…THQS).

This sequence belongs to the UPF0328 family.

In Encephalitozoon cuniculi (strain GB-M1) (Microsporidian parasite), this protein is UPF0328 protein ECU06_0030/ECU06_1690/ECU11_0020.